The following is a 183-amino-acid chain: Ferritin heavy chain (183 aa).

Residue Met-1 is modified to N-acetylmethionine. Position 2 is an N-acetylthreonine; in Ferritin heavy chain, N-terminally processed (Thr-2). A Ferritin-like diiron domain is found at 11 to 160 (QNYHQDSEAA…DHVTNLRKMG (150 aa)). Fe cation-binding residues include Glu-28, Glu-63, His-66, Glu-108, and Gln-142. Phosphoserine is present on residues Ser-179 and Ser-183.

Belongs to the ferritin family. As to quaternary structure, oligomer of 24 subunits. There are two types of subunits: L (light) chain and H (heavy) chain. The major chain can be light or heavy, depending on the species and tissue type. The functional molecule forms a roughly spherical shell with a diameter of 12 nm and contains a central cavity into which the insoluble mineral iron core is deposited. Interacts with NCOA4; NCOA4 promotes targeting of the iron-binding ferritin complex to autolysosomes following starvation or iron depletion.

Its subcellular location is the cytoplasm. It localises to the lysosome. The protein localises to the cytoplasmic vesicle. The protein resides in the autophagosome. It carries out the reaction 4 Fe(2+) + O2 + 4 H(+) = 4 Fe(3+) + 2 H2O. In terms of biological role, stores iron in a soluble, non-toxic, readily available form. Important for iron homeostasis. Has ferroxidase activity. Iron is taken up in the ferrous form and deposited as ferric hydroxides after oxidation. Also plays a role in delivery of iron to cells. Mediates iron uptake in capsule cells of the developing kidney. Delivery to lysosomes is mediated by the cargo receptor NCOA4 for autophagic degradation and release of iron. This is Ferritin heavy chain (FTH1) from Pongo abelii (Sumatran orangutan).